Here is a 414-residue protein sequence, read N- to C-terminus: Phosphoglycerate kinase (414 aa).

(2R)-3-phosphoglycerate contacts are provided by V23, D24, F25, N26, R39, S62, H63, G65, and R66. Y75 bears the Phosphotyrosine mark. A Phosphoserine modification is found at S76. Positions 121 and 122 each coordinate (2R)-3-phosphoglycerate. At S143 the chain carries Phosphoserine. Residues H168 and R169 each contribute to the (2R)-3-phosphoglycerate site. 3 positions are modified to phosphoserine: S172, S173, and S183. G211 is an ADP binding site. G211 lines the CDP pocket. Residues A212 and K213 each coordinate AMP. A212 contacts ATP. Residue A212 coordinates Mg(2+). Mg(2+) is bound by residues A215 and D216. D216 lines the CDP pocket. K217 lines the AMP pocket. K217 contributes to the ATP binding site. G235 serves as a coordination point for ADP. Residue G235 coordinates CDP. G236 contacts AMP. An ATP-binding site is contributed by G236. Phosphoserine occurs at positions 253 and 260. A Phosphothreonine modification is found at T299. Residue G310 participates in AMP binding. Residue G310 coordinates ATP. S328 is modified (phosphoserine). CDP contacts are provided by G335, A337, and F340. F340 serves as a coordination point for ADP. AMP is bound at residue E341. E341 is an ATP binding site. A Phosphoserine modification is found at S351. D372 and T373 together coordinate ATP. Mg(2+) is bound at residue D372. Phosphothreonine is present on T373. Phosphoserine is present on residues S387, S390, S412, and S413.

The protein belongs to the phosphoglycerate kinase family. In terms of assembly, monomer. The cofactor is Mg(2+).

Its subcellular location is the cytoplasm. The protein resides in the mitochondrion. It carries out the reaction (2R)-3-phosphoglycerate + ATP = (2R)-3-phospho-glyceroyl phosphate + ADP. It participates in carbohydrate degradation; glycolysis; pyruvate from D-glyceraldehyde 3-phosphate: step 2/5. Catalyzes one of the two ATP producing reactions in the glycolytic pathway via the reversible conversion of 1,3-diphosphoglycerate to 3-phosphoglycerate. Both L- and D- forms of purine and pyrimidine nucleotides can be used as substrates, but the activity is much lower on pyrimidines. Negatively regulates the biosynthesis of acetyl-CoA from pyruvate in the mitochondrion. This Schizosaccharomyces pombe (strain 972 / ATCC 24843) (Fission yeast) protein is Phosphoglycerate kinase (pgk1).